Reading from the N-terminus, the 293-residue chain is Ribosomal RNA small subunit methyltransferase H (293 aa).

Residues Gly-31 to Tyr-33, Asp-49, Phe-76, Asp-97, and Gln-104 each bind S-adenosyl-L-methionine.

It belongs to the methyltransferase superfamily. RsmH family.

It is found in the cytoplasm. The enzyme catalyses cytidine(1402) in 16S rRNA + S-adenosyl-L-methionine = N(4)-methylcytidine(1402) in 16S rRNA + S-adenosyl-L-homocysteine + H(+). Specifically methylates the N4 position of cytidine in position 1402 (C1402) of 16S rRNA. This Wolbachia sp. subsp. Drosophila simulans (strain wRi) protein is Ribosomal RNA small subunit methyltransferase H.